The sequence spans 1010 residues: Retinoblastoma-related protein 3 (1010 aa).

The domain A stretch occupies residues 416–616; the sequence is TPVSTAMTTA…EKGSSMYNSL (201 aa). The tract at residues 416 to 858 is pocket; it reads TPVSTAMTTA…NEVFIPAVKS (443 aa). The tract at residues 617–727 is spacer; it reads IVARPALSVE…PAAGGETCAE (111 aa). The segment at 728–858 is domain B; it reads TGIGVFFSKI…NEVFIPAVKS (131 aa). Disordered stretches follow at residues 867-889 and 986-1010; these read ASAS…FPES and GSDR…PSDS.

Belongs to the retinoblastoma protein (RB) family.

It is found in the nucleus. Regulator of biological processes that recruits a histone deacetylase to control gene transcription. May play a role in the entry into mitosis, negatively regulating the cell proliferation. Formation of stable complexes with geminiviridae replication-associated proteins may create a cellular environment which favors viral DNA replication. This Zea mays (Maize) protein is Retinoblastoma-related protein 3 (RBR3).